The primary structure comprises 264 residues: Nuclear egress protein 1 (264 aa).

Residues 1-12 show a composition bias toward basic residues; the sequence is MTVHKSRIRRSR. Positions 1-22 are disordered; that stretch reads MTVHKSRIRRSRSLSVTHRIQK. A CCCH-type zinc finger spans residues 83 to 187; sequence CLEFSPYANE…HIVFQSRTLH (105 aa).

This sequence belongs to the herpesviridae NEC1 protein family. Forms a heterohexameric complex with NEC2. Interacts with capsid vertex specific component 2/CVC2; this interaction directs the capsid to the host inner nuclear membrane to initiate budding. Post-translationally, phosphorylated at serine residues in the N-terminus. This phosphorylation regulates the localization within the inner nuclear membrane.

The protein localises to the host nucleus inner membrane. In terms of biological role, plays an essential role in virion nuclear egress, the first step of virion release from infected cell. Within the host nucleus, NEC1 interacts with the newly formed capsid through the vertexes and directs it to the inner nuclear membrane by associating with NEC2. Induces the budding of the capsid at the inner nuclear membrane as well as its envelopment into the perinuclear space. There, the NEC1/NEC2 complex promotes the fusion of the enveloped capsid with the outer nuclear membrane and the subsequent release of the viral capsid into the cytoplasm where it will reach the secondary budding sites in the host Golgi or trans-Golgi network. The sequence is that of Nuclear egress protein 1 from Human herpesvirus 6A (strain Uganda-1102) (HHV-6 variant A).